A 64-amino-acid polypeptide reads, in one-letter code: Conotoxin Tx3.5-a (64 aa).

The N-terminal stretch at 1-19 (MSKLGVLLTICLLLFPLTA) is a signal peptide. Residues 20 to 47 (LPLDGDQPADQAAERMQAEQHPLFDQKR) constitute a propeptide that is removed on maturation. 3 cysteine pairs are disulfide-bonded: Cys49–Cys58, Cys50–Cys62, and Cys54–Cys63. At Cys63 the chain carries Cysteine amide.

The protein belongs to the conotoxin M superfamily. Contains 3 disulfide bonds. In terms of processing, two peptides are produced from this precursor. Conotoxin Tx3.5-b is amidated at Cys-63, conotoxin Tx3.5-a has an unmodified C-terminus. As to expression, expressed by the venom duct. Is present in all duct parts with a highest content in part 2 (proximal of the venom bulb) and then decreases in concentration toward the end of the duct.

Its subcellular location is the secreted. The protein is Conotoxin Tx3.5-a of Conus textile (Cloth-of-gold cone).